The sequence spans 94 residues: Em protein CS41 (94 aa).

3 stretches are compositionally biased toward basic and acidic residues: residues 1-16 (MASG…DSLA), 33-53 (EAQE…KEQM), and 74-94 (GGER…KTKS). Residues 1–94 (MASGQEKGRS…IDESKFKTKS (94 aa)) form a disordered region.

The protein belongs to the small hydrophilic plant seed protein family.

It is thought to provide protection for the cytoplasm during the desiccation stage of embryo development. The polypeptide is Em protein CS41 (EM) (Triticum aestivum (Wheat)).